Consider the following 138-residue polypeptide: Acidic phospholipase A2 Ts-A6 (138 aa).

The signal sequence occupies residues 1-16; it reads MRALWIMAVLLLGVEG. Intrachain disulfides connect Cys-42-Cys-131, Cys-44-Cys-60, Cys-59-Cys-111, Cys-65-Cys-138, Cys-66-Cys-104, Cys-73-Cys-97, and Cys-91-Cys-102. Ca(2+)-binding residues include Tyr-43, Gly-45, and Gly-47. His-63 is an active-site residue. Ca(2+) is bound at residue Asp-64. Residue Asp-105 is part of the active site.

It depends on Ca(2+) as a cofactor. As to expression, expressed by the venom gland.

Its subcellular location is the secreted. It carries out the reaction a 1,2-diacyl-sn-glycero-3-phosphocholine + H2O = a 1-acyl-sn-glycero-3-phosphocholine + a fatty acid + H(+). Snake venom phospholipase A2 (PLA2) that shows a moderate inhibition of ADP-induced human platelet aggregation when tested on platelet rich plasma. Exhibits high hydrolytic activities and prefers the anionic micelles (dPPC with deoxycholate) to the zwitterionic micelles (dPPC with Triton X-100). PLA2 catalyzes the calcium-dependent hydrolysis of the 2-acyl groups in 3-sn-phosphoglycerides. The sequence is that of Acidic phospholipase A2 Ts-A6 from Trimeresurus stejnegeri (Chinese green tree viper).